The following is a 146-amino-acid chain: Ribosome maturation factor RimP (146 aa).

This sequence belongs to the RimP family.

The protein localises to the cytoplasm. In terms of biological role, required for maturation of 30S ribosomal subunits. This chain is Ribosome maturation factor RimP, found in Dechloromonas aromatica (strain RCB).